The primary structure comprises 425 residues: tRNA(Ile)-lysidine synthase (425 aa).

27–32 (SGGLDS) lines the ATP pocket.

This sequence belongs to the tRNA(Ile)-lysidine synthase family.

Its subcellular location is the cytoplasm. It carries out the reaction cytidine(34) in tRNA(Ile2) + L-lysine + ATP = lysidine(34) in tRNA(Ile2) + AMP + diphosphate + H(+). Ligates lysine onto the cytidine present at position 34 of the AUA codon-specific tRNA(Ile) that contains the anticodon CAU, in an ATP-dependent manner. Cytidine is converted to lysidine, thus changing the amino acid specificity of the tRNA from methionine to isoleucine. The protein is tRNA(Ile)-lysidine synthase of Streptococcus pneumoniae (strain Taiwan19F-14).